Here is a 225-residue protein sequence, read N- to C-terminus: Phosphoglycolate phosphatase (225 aa).

D11 serves as the catalytic Nucleophile. Mg(2+)-binding residues include D11, D13, and D174.

Belongs to the HAD-like hydrolase superfamily. CbbY/CbbZ/Gph/YieH family. The cofactor is Mg(2+).

The catalysed reaction is 2-phosphoglycolate + H2O = glycolate + phosphate. It functions in the pathway organic acid metabolism; glycolate biosynthesis; glycolate from 2-phosphoglycolate: step 1/1. Specifically catalyzes the dephosphorylation of 2-phosphoglycolate. Is involved in the dissimilation of the intracellular 2-phosphoglycolate formed during the DNA repair of 3'-phosphoglycolate ends, a major class of DNA lesions induced by oxidative stress. The sequence is that of Phosphoglycolate phosphatase from Nitrosococcus oceani (strain ATCC 19707 / BCRC 17464 / JCM 30415 / NCIMB 11848 / C-107).